Consider the following 397-residue polypeptide: MTTIDEVPGMADETALLDWLGTMREKQPVWQDRYGVWHVFRHADVQTVLRDTATFSSDPTRVIEGASPTPGMIHEIDPPEHRALRKVVSSAFTPRTISDLEPRIRDVTRSLLADAGESFDLVDVLAFPLPVTIVAELLGLPPMDHEQFGDWSGALVDIQMDDPTDPALAERIADVLNPLTAYLKARCAERRADPGDDLISRLVLAEVDGRALDDEEAANFSTALLLAGHITTTVLLGNIVRTLDEHPAHWDAAAEDPGRIPAIVEEVLRYRPPFPQMQRTTTKATEVAGVPIPADVMVNTWVLSANRDSDAHDDPDRFDPSRKSGGAAQLSFGHGVHFCLGAPLARLENRVALEEIIARFGRLTVDRDDERLRHFEQIVLGTRHLPVLAGSSPRQSA.

74 to 75 (HE) provides a ligand contact to substrate. Heme-binding residues include His-81 and Arg-85. Gln-278 is a binding site for substrate. Arg-279 provides a ligand contact to heme. The span at 307–322 (RDSDAHDDPDRFDPSR) shows a compositional bias: basic and acidic residues. The segment at 307–326 (RDSDAHDDPDRFDPSRKSGG) is disordered. The heme site is built by His-337 and Cys-339.

Belongs to the cytochrome P450 family. In terms of assembly, monomer. It depends on heme b as a cofactor.

The enzyme catalyses erythromycin D + NADPH + O2 + H(+) = erythromycin C + NADP(+) + H2O. It participates in antibiotic biosynthesis; erythromycin biosynthesis. In terms of biological role, responsible for the C-12 hydroxylation of the macrolactone ring of erythromycin. Thus, EryK catalyzes the hydroxylation of erythromycin D (ErD) at the C-12 position to produce erythromycin C (ErC). Erythromycin B (ErB) is not a substrate for this enzyme. The chain is Erythromycin C-12 hydroxylase (eryK) from Saccharopolyspora erythraea (strain ATCC 11635 / DSM 40517 / JCM 4748 / NBRC 13426 / NCIMB 8594 / NRRL 2338).